Consider the following 405-residue polypeptide: Acetate kinase (405 aa).

N7 provides a ligand contact to Mg(2+). Residue K14 participates in ATP binding. A substrate-binding site is contributed by R90. Catalysis depends on D147, which acts as the Proton donor/acceptor. ATP-binding positions include H207–G211, D282–R284, and G330–N334. E383 is a Mg(2+) binding site.

Belongs to the acetokinase family. As to quaternary structure, homodimer. It depends on Mg(2+) as a cofactor. Mn(2+) is required as a cofactor.

The protein localises to the cytoplasm. It catalyses the reaction acetate + ATP = acetyl phosphate + ADP. It functions in the pathway metabolic intermediate biosynthesis; acetyl-CoA biosynthesis; acetyl-CoA from acetate: step 1/2. Its function is as follows. Catalyzes the formation of acetyl phosphate from acetate and ATP. Can also catalyze the reverse reaction. The polypeptide is Acetate kinase (Pseudothermotoga lettingae (strain ATCC BAA-301 / DSM 14385 / NBRC 107922 / TMO) (Thermotoga lettingae)).